Here is a 274-residue protein sequence, read N- to C-terminus: 2,3,4,5-tetrahydropyridine-2,6-dicarboxylate N-succinyltransferase (274 aa).

This sequence belongs to the transferase hexapeptide repeat family.

The protein localises to the cytoplasm. It carries out the reaction (S)-2,3,4,5-tetrahydrodipicolinate + succinyl-CoA + H2O = (S)-2-succinylamino-6-oxoheptanedioate + CoA. The protein operates within amino-acid biosynthesis; L-lysine biosynthesis via DAP pathway; LL-2,6-diaminopimelate from (S)-tetrahydrodipicolinate (succinylase route): step 1/3. This chain is 2,3,4,5-tetrahydropyridine-2,6-dicarboxylate N-succinyltransferase, found in Salmonella agona (strain SL483).